A 523-amino-acid chain; its full sequence is Solute carrier family 2, facilitated glucose transporter member 2 (523 aa).

Residues methionine 1 to leucine 10 lie on the Cytoplasmic side of the membrane. Residues alanine 11–isoleucine 31 form a helical membrane-spanning segment. Residues asparagine 32–serine 97 are Extracellular-facing. N-linked (GlcNAc...) asparagine glycosylation is present at asparagine 62. Residues leucine 98 to glycine 118 form a helical membrane-spanning segment. At aspartate 119–alanine 126 the chain is on the cytoplasmic side. Residues methionine 127 to glycine 147 traverse the membrane as a helical segment. At proline 148–arginine 157 the chain is on the extracellular side. The helical transmembrane segment at serine 158 to isoleucine 178 threads the bilayer. Over alanine 179–alanine 186 the chain is Cytoplasmic. A helical transmembrane segment spans residues leucine 187–leucine 207. Glutamine 192 is a D-glucose binding site. The Extracellular segment spans residues serine 208–histidine 216. The chain crosses the membrane as a helical span at residues tryptophan 217 to phenylalanine 237. The Cytoplasmic segment spans residues cysteine 238–proline 302. Residues isoleucine 303–tyrosine 323 traverse the membrane as a helical segment. Residues glutamine 313–glutamine 314 and asparagine 319 each bind D-glucose. Residues tyrosine 324–proline 337 are Extracellular-facing. The helical transmembrane segment at valine 338 to leucine 358 threads the bilayer. Asparagine 348 serves as a coordination point for D-glucose. The Cytoplasmic segment spans residues valine 359–leucine 367. The helical transmembrane segment at phenylalanine 368–leucine 388 threads the bilayer. Residues leucine 389–threonine 401 are Extracellular-facing. The helical transmembrane segment at alanine 402–valine 422 threads the bilayer. Residues glutamate 411 and tryptophan 419 each contribute to the D-glucose site. The Cytoplasmic segment spans residues alanine 423 to proline 432. Residues threonine 433–phenylalanine 453 traverse the membrane as a helical segment. Residues glutamine 454 to leucine 460 are Extracellular-facing. A helical membrane pass occupies residues glycine 461–phenylalanine 481. Over lysine 482–valine 523 the chain is Cytoplasmic. Serine 522 is modified (phosphoserine).

It belongs to the major facilitator superfamily. Sugar transporter (TC 2.A.1.1) family. Glucose transporter subfamily. Post-translationally, N-glycosylated; required for stability and retention at the cell surface of pancreatic beta cells. In embryo, expressed in endoderm layer of yolk sac and liver primordium.

Its subcellular location is the cell membrane. The catalysed reaction is D-glucose(out) = D-glucose(in). The enzyme catalyses D-fructose(out) = D-fructose(in). It catalyses the reaction L-dehydroascorbate(out) = L-dehydroascorbate(in). It carries out the reaction D-galactose(in) = D-galactose(out). With respect to regulation, D-glucose and maltose competitively inhibit fructose transport. D-glucose, D-fructose and maltose inhibit deoxyglucose transport. In terms of biological role, facilitative hexose transporter that mediates the transport of glucose, fructose and galactose. Likely mediates the bidirectional transfer of glucose across the plasma membrane of hepatocytes and is responsible for uptake of glucose by the beta cells; may comprise part of the glucose-sensing mechanism of the beta cell. May also participate with the Na(+)/glucose cotransporter in the transcellular transport of glucose in the small intestine and kidney. Also able to mediate the transport of dehydroascorbate. The chain is Solute carrier family 2, facilitated glucose transporter member 2 from Mus musculus (Mouse).